Reading from the N-terminus, the 148-residue chain is Wheatwin-2 (148 aa).

The N-terminal stretch at 1 to 23 (MTMAARLMLVAALLCAAAAAATA) is a signal peptide. Gln-24 is modified (pyrrolidone carboxylic acid). The 125-residue stretch at 24 to 148 (QQATNVRATY…VNYQFVDCRD (125 aa)) folds into the Barwin domain. Intrachain disulfides connect Cys-54–Cys-86, Cys-75–Cys-109, and Cys-89–Cys-146.

In terms of assembly, monomer.

Functionally, shows antifungal activity towards B.cinerea and towards the wheat-specific pathogenic fungi F.culmorum and F.graminearum (groups 1 and 2). The protein is Wheatwin-2 (PR4B) of Triticum aestivum (Wheat).